The sequence spans 302 residues: Sulfate adenylyltransferase subunit 2 (302 aa).

Residues R280–F302 are disordered.

This sequence belongs to the PAPS reductase family. CysD subfamily. Heterodimer composed of CysD, the smaller subunit, and CysN.

The enzyme catalyses sulfate + ATP + H(+) = adenosine 5'-phosphosulfate + diphosphate. The protein operates within sulfur metabolism; hydrogen sulfide biosynthesis; sulfite from sulfate: step 1/3. With CysN forms the ATP sulfurylase (ATPS) that catalyzes the adenylation of sulfate producing adenosine 5'-phosphosulfate (APS) and diphosphate, the first enzymatic step in sulfur assimilation pathway. APS synthesis involves the formation of a high-energy phosphoric-sulfuric acid anhydride bond driven by GTP hydrolysis by CysN coupled to ATP hydrolysis by CysD. This is Sulfate adenylyltransferase subunit 2 from Shewanella baltica (strain OS185).